The chain runs to 492 residues: Catalase-2 (492 aa).

Residues His-65 and Asn-138 contribute to the active site. Tyr-348 contributes to the heme binding site.

The protein belongs to the catalase family. As to quaternary structure, homotetramer and heterotetramer. At least six or seven isozymes are produced from a mixture of 3 gene products. Interacts with NCA1. Interacts with LSD1. Heme is required as a cofactor.

It localises to the cytoplasm. The protein resides in the cytosol. It is found in the peroxisome matrix. The catalysed reaction is 2 H2O2 = O2 + 2 H2O. Catalyzes the degradation of hydrogen peroxide (H(2)O(2)) generated by peroxisomal oxidases to water and oxygen, thereby protecting cells from the toxic effects of hydrogen peroxide. The sequence is that of Catalase-2 (CAT2) from Arabidopsis thaliana (Mouse-ear cress).